The sequence spans 269 residues: Xyloglucan endotransglucosylase/hydrolase protein 24 (269 aa).

A signal peptide spans 1 to 21; it reads MSPFKIFFFTTLLVAAFSVSA. In terms of domain architecture, GH16 spans 22–212; it reads ADFNTDVNVA…WSKAPFMASY (191 aa). The active-site Nucleophile is the E98. E102 acts as the Proton donor in catalysis. E102 provides a ligand contact to xyloglucan. Residue N106 is glycosylated (N-linked (GlcNAc...) asparagine). Residues 115–117, 125–127, 191–192, G196, and R256 contribute to the xyloglucan site; these read HTN, DKE, and DW. C251 and C265 are joined by a disulfide.

The protein belongs to the glycosyl hydrolase 16 family. XTH group 2 subfamily. In terms of processing, contains at least one intrachain disulfide bond essential for its enzymatic activity. N-glycosylated; essential for its enzymatic activity. In terms of tissue distribution, highly expressed. Predominantly expressed in stems. Expressed in shoot apical meristems, also found in seedlings and meristems.

Its subcellular location is the secreted. The protein localises to the cell wall. It is found in the extracellular space. It localises to the apoplast. It carries out the reaction breaks a beta-(1-&gt;4) bond in the backbone of a xyloglucan and transfers the xyloglucanyl segment on to O-4 of the non-reducing terminal glucose residue of an acceptor, which can be a xyloglucan or an oligosaccharide of xyloglucan.. In terms of biological role, catalyzes xyloglucan endohydrolysis (XEH) and/or endotransglycosylation (XET). Cleaves and religates xyloglucan polymers, an essential constituent of the primary cell wall, and thereby participates in cell wall construction of growing tissues. May be required during development to modify the walls of cells under mechanical stress. This chain is Xyloglucan endotransglucosylase/hydrolase protein 24 (XTH24), found in Arabidopsis thaliana (Mouse-ear cress).